A 95-amino-acid chain; its full sequence is Small ribosomal subunit protein bS6 (95 aa).

It belongs to the bacterial ribosomal protein bS6 family.

Binds together with bS18 to 16S ribosomal RNA. This is Small ribosomal subunit protein bS6 from Clostridium kluyveri (strain NBRC 12016).